A 696-amino-acid polypeptide reads, in one-letter code: MRRRSLALRLLLALLLLPPPLPQTLLGAPCPEPCSCRPDGALRCPGPRAGLSRLSLTYLPIKVIPSQAFRGLNEVVKIEISQSDSLEKIEANAFDNLLNLSEILIQNTKNLVYIEPGAFTNLPRLKYLSICNTGIRKLPDVTKIFSSEFNFILEICDNLHITTVPANAFQGMNNESITLKLYGNGFEEIQSHAFNGTTLISLELKENAHLKKMHNDAFRGARGPSILDISSTKLQALPSYGLESIQTLIATSSYSLKKLPSREKFTNLLDATLTYPSHCCAFRNLPTKEQNFSFSIFKNFSKQCESTARRPNNETLYSAIFAESELSDWDYDYGFCSPKTLQCAPEPDAFNPCEDIMGYDFLRVLIWLINILAIMGNVTVLFVLLTSHYKLTVPRFLMCNLSFADFCMGLYLLLIASVDAQTKGQYYNHAIDWQTGNGCSVAGFFTVFASELSVYTLTVITLERWHTITYAIQLDQKLRLRHAIPIMLGGWLFSTLIAMLPLVGVSSYMKVSICLPMDVETTLSQVYILTILILNVVAFIIICACYIKIYFAVQNPELMATNKDTKIAKKMAVLIFTDFTCMAPISFFAISAALKVPLITVTNSKVLLVLFYPVNSCANPFLYAIFTKAFRRDFFLLLSKSGCCKHQAELYRRKDFSAYCKNGFTGSNKPSRSTLKLTTLQCQYSTVMDKTCYKDC.

An N-terminal signal peptide occupies residues 1–27; that stretch reads MRRRSLALRLLLALLLLPPPLPQTLLG. The Extracellular segment spans residues 28-358; that stretch reads APCPEPCSCR…AFNPCEDIMG (331 aa). Asn-99 is a glycosylation site (N-linked (GlcNAc...) asparagine). LRR repeat units lie at residues 122-147, 149-171, 172-196, 198-220, 221-244, and 250-271; these read LPRL…IFSS, FNFI…AFQG, MNNE…AFNG, TLIS…AFRG, ARGP…GLES, and ATSS…LLDA. N-linked (GlcNAc...) asparagine glycosylation is found at Asn-174 and Asn-195. N-linked (GlcNAc...) asparagine glycosylation is found at Asn-291, Asn-299, and Asn-313. Tyr-331 bears the Sulfotyrosine mark. The helical transmembrane segment at 359 to 386 threads the bilayer; it reads YDFLRVLIWLINILAIMGNVTVLFVLLT. The Cytoplasmic segment spans residues 387–395; sequence SHYKLTVPR. The helical transmembrane segment at 396-418 threads the bilayer; the sequence is FLMCNLSFADFCMGLYLLLIASV. The Extracellular segment spans residues 419-439; it reads DAQTKGQYYNHAIDWQTGNGC. A disulfide bridge connects residues Cys-439 and Cys-514. Residues 440–462 traverse the membrane as a helical segment; it reads SVAGFFTVFASELSVYTLTVITL. Residues 463 to 482 lie on the Cytoplasmic side of the membrane; sequence ERWHTITYAIQLDQKLRLRH. The chain crosses the membrane as a helical span at residues 483–505; the sequence is AIPIMLGGWLFSTLIAMLPLVGV. Residues 506–525 are Extracellular-facing; sequence SSYMKVSICLPMDVETTLSQ. Residues 526–547 traverse the membrane as a helical segment; that stretch reads VYILTILILNVVAFIIICACYI. The Cytoplasmic segment spans residues 548–570; the sequence is KIYFAVQNPELMATNKDTKIAKK. The helical transmembrane segment at 571–594 threads the bilayer; it reads MAVLIFTDFTCMAPISFFAISAAL. Residues 595–605 lie on the Extracellular side of the membrane; that stretch reads KVPLITVTNSK. A helical transmembrane segment spans residues 606 to 626; that stretch reads VLLVLFYPVNSCANPFLYAIF. At 627–696 the chain is on the cytoplasmic side; that stretch reads TKAFRRDFFL…VMDKTCYKDC (70 aa). S-palmitoyl cysteine attachment occurs at residues Cys-643 and Cys-644.

This sequence belongs to the G-protein coupled receptor 1 family. FSH/LSH/TSH subfamily. In terms of processing, sulfated.

The protein resides in the cell membrane. Receptor for lutropin-choriogonadotropic hormone. The activity of this receptor is mediated by G proteins which activate adenylate cyclase. This is Lutropin-choriogonadotropic hormone receptor (LHCGR) from Sus scrofa (Pig).